A 162-amino-acid chain; its full sequence is Regulatory protein RecX (162 aa).

This sequence belongs to the RecX family.

It localises to the cytoplasm. Functionally, modulates RecA activity. The protein is Regulatory protein RecX of Pectobacterium atrosepticum (strain SCRI 1043 / ATCC BAA-672) (Erwinia carotovora subsp. atroseptica).